Consider the following 192-residue polypeptide: Ras-like GTP-binding protein rhoA (192 aa).

Position 12 to 19 (12 to 19 (GDGACGKT)) interacts with GTP. The Effector region motif lies at 34–42 (YVPTVFENY). Residues 59-63 (DTAGQ) and 117-120 (NKRD) each bind GTP. Cysteine 189 bears the Cysteine methyl ester mark. Residue cysteine 189 is the site of S-geranylgeranyl cysteine attachment. The propeptide at 190 to 192 (MIL) is removed in mature form.

This sequence belongs to the small GTPase superfamily. Rho family. In terms of assembly, may interact with unc-89 (via DN and PH domains). Interacts with bli-3 and memo-1. In larvae and adults, enriched at the tip of the head where the anterior sensory organ is located and in the pharyngeal nerve ring (at protein level). In embryos, enriched at the boundaries of dorsal cells undergoing intercalation, ventral enclosure and elongation.

Its subcellular location is the cell membrane. It is found in the cytoplasm. The protein resides in the cytoskeleton. The protein localises to the cell cortex. Its activity is regulated as follows. GTP hydrolysis is stimulated by unc-89. Its function is as follows. Required for ventral migration of epidermal cells during ventral enclosure in the embryo and for cell elongation. Also required for ventral migration of P cells during larval development. Involved in asymmetric spindle positioning during anaphase and establishment of cell polarity during embryo development. In adults, involved in regulation of multiple processes including locomotion, pharyngeal pumping, fecundity, ovulation, defecation and body morphology. In body wall muscles, regulates organization of myosin thick filaments downstream of unc-89. Association with the oxidase bli-3 promotes ROS production and this interaction may be modulated by memo-1, in order to control the oxidative stress response and longevity. This Caenorhabditis elegans protein is Ras-like GTP-binding protein rhoA.